The following is a 162-amino-acid chain: Phosphopantetheine adenylyltransferase (162 aa).

Serine 11 is a substrate binding site. ATP contacts are provided by residues 11 to 12 (SF) and histidine 19. Substrate contacts are provided by lysine 43, valine 76, and arginine 90. Residues 91–93 (GLR), glutamate 101, and 126–132 (HLYISSS) each bind ATP.

This sequence belongs to the bacterial CoaD family. Homohexamer. The cofactor is Mg(2+).

Its subcellular location is the cytoplasm. The enzyme catalyses (R)-4'-phosphopantetheine + ATP + H(+) = 3'-dephospho-CoA + diphosphate. It functions in the pathway cofactor biosynthesis; coenzyme A biosynthesis; CoA from (R)-pantothenate: step 4/5. Its function is as follows. Reversibly transfers an adenylyl group from ATP to 4'-phosphopantetheine, yielding dephospho-CoA (dPCoA) and pyrophosphate. This chain is Phosphopantetheine adenylyltransferase, found in Streptococcus pneumoniae (strain ATCC 700669 / Spain 23F-1).